A 186-amino-acid chain; its full sequence is Cell division protein SepF (186 aa).

The interval 24 to 91 (EDEEEEERYA…HNPPHLRAVP (68 aa)) is disordered.

Belongs to the SepF family. Homodimer. Interacts with FtsZ.

The protein resides in the cytoplasm. Cell division protein that is part of the divisome complex and is recruited early to the Z-ring. Probably stimulates Z-ring formation, perhaps through the cross-linking of FtsZ protofilaments. Its function overlaps with FtsA. The chain is Cell division protein SepF from Rubrobacter xylanophilus (strain DSM 9941 / JCM 11954 / NBRC 16129 / PRD-1).